A 77-amino-acid chain; its full sequence is uncharacterized protein (77 aa).

The next 2 helical transmembrane spans lie at 22-42 (VFAN…LPVG) and 44-64 (LIGL…FFLG).

The protein localises to the cell membrane. This is an uncharacterized protein from Methanocaldococcus jannaschii (strain ATCC 43067 / DSM 2661 / JAL-1 / JCM 10045 / NBRC 100440) (Methanococcus jannaschii).